The primary structure comprises 157 residues: Small ribosomal subunit protein uS7 (157 aa).

This sequence belongs to the universal ribosomal protein uS7 family. In terms of assembly, part of the 30S ribosomal subunit. Contacts proteins S9 and S11.

One of the primary rRNA binding proteins, it binds directly to 16S rRNA where it nucleates assembly of the head domain of the 30S subunit. Is located at the subunit interface close to the decoding center, probably blocks exit of the E-site tRNA. This is Small ribosomal subunit protein uS7 from Verminephrobacter eiseniae (strain EF01-2).